We begin with the raw amino-acid sequence, 219 residues long: Small ribosomal subunit protein uS4 (219 aa).

The S4 RNA-binding domain occupies 112-174 (RRLQTQVLRL…GSSPLMSESH (63 aa)). Positions 193-219 (KAAAEAKQARERPPERGGGRKKRGGRR) are disordered. Residues 199-210 (KQARERPPERGG) show a composition bias toward basic and acidic residues.

Belongs to the universal ribosomal protein uS4 family. Part of the 30S ribosomal subunit. Contacts protein S5. The interaction surface between S4 and S5 is involved in control of translational fidelity.

In terms of biological role, one of the primary rRNA binding proteins, it binds directly to 16S rRNA where it nucleates assembly of the body of the 30S subunit. Its function is as follows. With S5 and S12 plays an important role in translational accuracy. This Methanosarcina mazei (strain ATCC BAA-159 / DSM 3647 / Goe1 / Go1 / JCM 11833 / OCM 88) (Methanosarcina frisia) protein is Small ribosomal subunit protein uS4.